Here is a 76-residue protein sequence, read N- to C-terminus: Zinc finger protein 706 (76 aa).

Positions methionine 1 to lysine 13 are enriched in low complexity. Disordered regions lie at residues methionine 1–alanine 32 and threonine 53–alanine 76. Over residues asparagine 14 to glutamine 25 the composition is skewed to basic residues. The segment at tyrosine 39–histidine 62 adopts a C2H2-type zinc-finger fold. Basic and acidic residues predominate over residues threonine 53 to histidine 62.

It localises to the cytoplasm. Its subcellular location is the nucleus. In terms of biological role, transcription repressor involved in the exit of embryonic stem cells (ESCs) from self-renewal. Acts by repressing expression of KLF4. This chain is Zinc finger protein 706, found in Homo sapiens (Human).